Reading from the N-terminus, the 200-residue chain is Protein RISC-INTERACTING CLEARING 3'-5' EXORIBONUCLEASE 1 (200 aa).

3 oligomerization regions span residues 35-66 (SKILEDSVWNGNRSIVFDVYWDVKSVSTKSEW), 102-127 (KFVTFVGVQIQEDLALLKENHGIVIR), and 166-173 (DSIQSKWD).

Belongs to the RICE family. Homohexamer with DnaQ-like exonuclease fold in a ring-shaped structure with a central cavity. Component of AGO1 and AGO10-centered RNA-induced silencing complexes (RISC). Interacts with and acts as a cofactor of AGO1 and AGO10. As to expression, ubiquitously expressed throughout development in germinating seeds, cotyledons, leaves and roots of young seedlings and adult plants, stems and inflorescence.

It is found in the cytoplasm. The enzyme catalyses Exonucleolytic cleavage in the 3'- to 5'-direction to yield nucleoside 5'-phosphates.. 3'-to-5' exoribonuclease (RNase) specifically targeting single-stranded RNAs. Triggers miRNA accumulation in RNA-induced silencing complex (RISC), composed of miRNAs and AGO proteins, by degrading uridylated cleavage fragments. Required during plant growth and development. The chain is Protein RISC-INTERACTING CLEARING 3'-5' EXORIBONUCLEASE 1 from Arabidopsis thaliana (Mouse-ear cress).